The sequence spans 346 residues: Putative alpha/beta hydrolase R526 (346 aa).

Belongs to the AB hydrolase 3 family.

It localises to the virion. This chain is Putative alpha/beta hydrolase R526, found in Acanthamoeba polyphaga mimivirus (APMV).